A 250-amino-acid chain; its full sequence is Ribosomal RNA small subunit methyltransferase J (250 aa).

S-adenosyl-L-methionine is bound by residues Arg101–Asp102, Glu117–Arg118, Ser153–Ser154, and Asp171.

This sequence belongs to the methyltransferase superfamily. RsmJ family.

The protein localises to the cytoplasm. It carries out the reaction guanosine(1516) in 16S rRNA + S-adenosyl-L-methionine = N(2)-methylguanosine(1516) in 16S rRNA + S-adenosyl-L-homocysteine + H(+). Its function is as follows. Specifically methylates the guanosine in position 1516 of 16S rRNA. The protein is Ribosomal RNA small subunit methyltransferase J of Shigella dysenteriae serotype 1 (strain Sd197).